We begin with the raw amino-acid sequence, 203 residues long: Holliday junction branch migration complex subunit RuvA (203 aa).

The domain I stretch occupies residues 1-61; that stretch reads MIIYKYGKIM…EYTKVTYGFD (61 aa). The segment at 62–139 is domain II; the sequence is NFKELVIFED…KFMKKLTSDE (78 aa). Positions 140-147 are flexible linker; that stretch reads AAKIKVPA. Residues 147-203 are domain III; it reads ASSENENKFLDTMKMLGFKQQQIKFALDKIELNDDIETCVENAIKLISQQQHETSRV.

The protein belongs to the RuvA family. Homotetramer. Forms an RuvA(8)-RuvB(12)-Holliday junction (HJ) complex. HJ DNA is sandwiched between 2 RuvA tetramers; dsDNA enters through RuvA and exits via RuvB. An RuvB hexamer assembles on each DNA strand where it exits the tetramer. Each RuvB hexamer is contacted by two RuvA subunits (via domain III) on 2 adjacent RuvB subunits; this complex drives branch migration. In the full resolvosome a probable DNA-RuvA(4)-RuvB(12)-RuvC(2) complex forms which resolves the HJ.

It localises to the cytoplasm. Functionally, the RuvA-RuvB-RuvC complex processes Holliday junction (HJ) DNA during genetic recombination and DNA repair, while the RuvA-RuvB complex plays an important role in the rescue of blocked DNA replication forks via replication fork reversal (RFR). RuvA specifically binds to HJ cruciform DNA, conferring on it an open structure. The RuvB hexamer acts as an ATP-dependent pump, pulling dsDNA into and through the RuvAB complex. HJ branch migration allows RuvC to scan DNA until it finds its consensus sequence, where it cleaves and resolves the cruciform DNA. This Metamycoplasma arthritidis (strain 158L3-1) (Mycoplasma arthritidis) protein is Holliday junction branch migration complex subunit RuvA.